Here is a 264-residue protein sequence, read N- to C-terminus: Zearalenone hydrolase (264 aa).

The AB hydrolase-1 domain occupies 27–207 (VLVPDGLGEC…KDLEALRGKP (181 aa)). Residues G32, S102, and S103 each contribute to the zearalenone site. S102 is a catalytic residue. Residue E126 is part of the active site. Residues W183, Y187, S220, and H242 each coordinate zearalenone. Residue H242 is part of the active site.

Belongs to the AB hydrolase superfamily. Hydrolase RutD family. In terms of assembly, homodimer.

It catalyses the reaction zearalenone + H2O = hydrolyzed zearalenone + H(+). Its function is as follows. Lactonohydrolase that specifically hydrolyzes and deactivates the mycotoxin zearalenone (ZEN) and its zearalenol (ZOL) derivatives. ZHD101 prefers ZEN to ZOL as its substrate, but ZOL, especially the alpha-form, shows higher estrogenic toxicity than ZEN. This is Zearalenone hydrolase from Bionectria ochroleuca (Gliocladium roseum).